A 197-amino-acid chain; its full sequence is Small ribosomal subunit protein uS4B (197 aa).

One can recognise an S4 RNA-binding domain in the interval 88–153; that stretch reads CRLDNMVYRM…IEKYLSNLKN (66 aa).

Belongs to the universal ribosomal protein uS4 family. Part of the 30S ribosomal subunit. Contacts protein S5. The interaction surface between S4 and S5 is involved in control of translational fidelity.

In terms of biological role, one of the primary rRNA binding proteins, it binds directly to 16S rRNA where it nucleates assembly of the body of the 30S subunit. Functionally, with S5 and S12 plays an important role in translational accuracy. This is Small ribosomal subunit protein uS4B from Alkaliphilus oremlandii (strain OhILAs) (Clostridium oremlandii (strain OhILAs)).